The primary structure comprises 336 residues: Glucokinase (336 aa).

13–18 (ADVGGT) lines the ATP pocket.

It belongs to the bacterial glucokinase family.

The protein localises to the cytoplasm. It catalyses the reaction D-glucose + ATP = D-glucose 6-phosphate + ADP + H(+). This chain is Glucokinase, found in Cupriavidus metallidurans (strain ATCC 43123 / DSM 2839 / NBRC 102507 / CH34) (Ralstonia metallidurans).